The sequence spans 4467 residues: Protocadherin-like protein (4467 aa).

The first 22 residues, 1-22 (MRGINAIVGFLLCFCLLHRINT), serve as a signal peptide directing secretion. 28 Cadherin domains span residues 23 to 128 (AVQF…SPTF), 129 to 238 (PQHL…SPVF), 239 to 350 (EKKS…VPVF), 351 to 455 (QEES…TPVF), 459 to 566 (NPQQ…NPDF), 567 to 664 (SKVV…PPTF), 665 to 764 (KNAP…PPTF), 765 to 884 (SRSS…SPEF), 885 to 994 (SQTS…PPLF), 1092 to 1197 (EAQP…QPRF), 1290 to 1395 (SRTV…SPKF), 1396 to 1499 (SADS…PPKF), 1495 to 1597 (GPPK…EPQF), 1601 to 1701 (SNGF…QPVR), 1793 to 1891 (TMID…KPQF), 1892 to 1992 (SESA…YPKF), 1993 to 2100 (EPNL…KPQF), 2101 to 2202 (LESD…RPVF), 2203 to 2312 (TDCP…FPFF), 2313 to 2423 (LTRT…PPAF), 2425 to 2529 (PSAV…TPTF), 2530 to 2639 (KLEE…PPIF), 2640 to 2746 (PKPS…IPKF), 2747 to 2849 (DNLI…SPYF), 2850 to 2954 (PNPP…APVF), 2955 to 3062 (NPRE…PPVF), 3063 to 3170 (VPAE…GPWF), and 3173 to 3288 (RYYE…EPFD). Residues 23–4258 (AVQFKQEILE…RPSSRWANPA (4236 aa)) are Extracellular-facing. Residues 3551–3589 (PDINCTTGTPCLHGGTCHNAVPKGIICECGRDYLGPECQ) enclose the EGF-like 1 domain. 7 disulfide bridges follow: Cys3555–Cys3567, Cys3561–Cys3577, Cys3579–Cys3588, Cys3762–Cys3788, Cys3794–Cys3803, Cys3797–Cys3812, and Cys3814–Cys3823. Residues 3590 to 3788 (STTRTFRGNS…LKEVNTELGC (199 aa)) enclose the Laminin G-like 1 domain. One can recognise an EGF-like 2 domain in the interval 3790–3824 (LNNQCPNCNGRGYCEPFWNYAICVCDLGFGGANCD). The Laminin G-like 2 domain maps to 3842-4096 (VKQVKRKRRE…KVIISSSGGS (255 aa)). A disordered region spans residues 4089-4118 (IISSSGGSVSGGSGGASGGSGGASGSGGSV). Residues 4096-4118 (SVSGGSGGASGGSGGASGSGGSV) are compositionally biased toward gly residues. The EGF-like 3 domain occupies 4206–4238 (PCGSNFCRHGGTCVSADPPYCLCPVGWSGPVCE). 3 disulfide bridges follow: Cys4207-Cys4218, Cys4212-Cys4226, and Cys4228-Cys4237. The chain crosses the membrane as a helical span at residues 4259–4279 (VIACILVILLAILVIIGAVLL). Over 4280 to 4467 (KRRPQPAVVA…NLNRIFNEDE (188 aa)) the chain is Cytoplasmic. The tract at residues 4424-4445 (DVDDLSELGDSDEEPDEEEEQE) is disordered.

Component of the acid-insoluble organic matrix of the aragonitic skeleton (at protein level).

The protein localises to the membrane. This Acropora millepora (Staghorn coral) protein is Protocadherin-like protein.